The following is a 212-amino-acid chain: Thiamine-phosphate synthase (212 aa).

4-amino-2-methyl-5-(diphosphooxymethyl)pyrimidine-binding positions include 33-37 (QMRFK) and N65. Mg(2+) is bound by residues D66 and D85. A 4-amino-2-methyl-5-(diphosphooxymethyl)pyrimidine-binding site is contributed by T104. 130–132 (TNT) contributes to the 2-[(2R,5Z)-2-carboxy-4-methylthiazol-5(2H)-ylidene]ethyl phosphate binding site. Position 133 (K133) interacts with 4-amino-2-methyl-5-(diphosphooxymethyl)pyrimidine. G166 serves as a coordination point for 2-[(2R,5Z)-2-carboxy-4-methylthiazol-5(2H)-ylidene]ethyl phosphate.

The protein belongs to the thiamine-phosphate synthase family. Mg(2+) serves as cofactor.

The enzyme catalyses 2-[(2R,5Z)-2-carboxy-4-methylthiazol-5(2H)-ylidene]ethyl phosphate + 4-amino-2-methyl-5-(diphosphooxymethyl)pyrimidine + 2 H(+) = thiamine phosphate + CO2 + diphosphate. It carries out the reaction 2-(2-carboxy-4-methylthiazol-5-yl)ethyl phosphate + 4-amino-2-methyl-5-(diphosphooxymethyl)pyrimidine + 2 H(+) = thiamine phosphate + CO2 + diphosphate. The catalysed reaction is 4-methyl-5-(2-phosphooxyethyl)-thiazole + 4-amino-2-methyl-5-(diphosphooxymethyl)pyrimidine + H(+) = thiamine phosphate + diphosphate. Its pathway is cofactor biosynthesis; thiamine diphosphate biosynthesis; thiamine phosphate from 4-amino-2-methyl-5-diphosphomethylpyrimidine and 4-methyl-5-(2-phosphoethyl)-thiazole: step 1/1. Condenses 4-methyl-5-(beta-hydroxyethyl)thiazole monophosphate (THZ-P) and 2-methyl-4-amino-5-hydroxymethyl pyrimidine pyrophosphate (HMP-PP) to form thiamine monophosphate (TMP). The sequence is that of Thiamine-phosphate synthase from Flavobacterium johnsoniae (strain ATCC 17061 / DSM 2064 / JCM 8514 / BCRC 14874 / CCUG 350202 / NBRC 14942 / NCIMB 11054 / UW101) (Cytophaga johnsonae).